A 463-amino-acid polypeptide reads, in one-letter code: L-seryl-tRNA(Sec) selenium transferase (463 aa).

Lys295 is subject to N6-(pyridoxal phosphate)lysine.

It belongs to the SelA family. Homodecamer; pentamer of dimers. Binds only one seryl-tRNA(Sec) per dimer. Requires pyridoxal 5'-phosphate as cofactor.

It localises to the cytoplasm. The catalysed reaction is L-seryl-tRNA(Sec) + selenophosphate + H(+) = L-selenocysteinyl-tRNA(Sec) + phosphate. Its pathway is aminoacyl-tRNA biosynthesis; selenocysteinyl-tRNA(Sec) biosynthesis; selenocysteinyl-tRNA(Sec) from L-seryl-tRNA(Sec) (bacterial route): step 1/1. Its function is as follows. Converts seryl-tRNA(Sec) to selenocysteinyl-tRNA(Sec) required for selenoprotein biosynthesis. This is L-seryl-tRNA(Sec) selenium transferase from Shigella sonnei (strain Ss046).